The primary structure comprises 379 residues: Beta-1,3-N-acetylglucosaminyltransferase lunatic fringe (379 aa).

Over 1–8 (MLKRCGRR) the chain is Cytoplasmic. The helical; Signal-anchor for type II membrane protein transmembrane segment at 9 to 29 (LLLALAGALLACLLVLTADPP) threads the bilayer. Residues 30 to 379 (PPPLPAERGR…TPWCPRTAIF (350 aa)) lie on the Lumenal side of the membrane. The interval 86–107 (RDAGPPPGAAPRPADGHPRPLA) is disordered. Arginine 129 is a substrate binding site. A glycan (N-linked (GlcNAc...) asparagine) is linked at asparagine 167. Disulfide bonds link cysteine 168/cysteine 179 and cysteine 197/cysteine 260. Aspartate 201 provides a ligand contact to substrate. Position 202 (aspartate 202) interacts with Mn(2+). Aspartate 290 is an active-site residue. Residue histidine 314 participates in Mn(2+) binding. Cysteine 364 and cysteine 373 are joined by a disulfide.

The protein belongs to the glycosyltransferase 31 family. It depends on Mn(2+) as a cofactor. Co(2+) is required as a cofactor. A soluble form may be derived from the membrane form by proteolytic processing.

It localises to the golgi apparatus. It is found in the golgi apparatus membrane. The catalysed reaction is 3-O-(alpha-L-fucosyl)-L-threonyl-[EGF-like domain protein] + UDP-N-acetyl-alpha-D-glucosamine = 3-O-(N-acetyl-beta-D-glucosaminyl-(1-&gt;3)-alpha-L-fucosyl)-L-threonyl-[EGF-like domain protein] + UDP + H(+). It catalyses the reaction 3-O-(alpha-L-fucosyl)-L-seryl-[EGF-like domain protein] + UDP-N-acetyl-alpha-D-glucosamine = 3-O-(N-acetyl-beta-D-glucosaminyl-(1-&gt;3)-alpha-L-fucosyl)-L-seryl-[EGF-like domain protein] + UDP + H(+). Glycosyltransferase that initiates the elongation of O-linked fucose residues attached to EGF-like repeats in the extracellular domain of Notch molecules. Modulates NOTCH1 activity by modifying O-fucose residues at specific EGF-like domains resulting in inhibition of NOTCH1 activation by JAG1 and enhancement of NOTCH1 activation by DLL1 via an increase in its binding to DLL1. Decreases the binding of JAG1 to NOTCH2 but not that of DLL1. Essential mediator of somite segmentation and patterning. The chain is Beta-1,3-N-acetylglucosaminyltransferase lunatic fringe from Homo sapiens (Human).